A 486-amino-acid polypeptide reads, in one-letter code: Ribosomal RNA small subunit methyltransferase F (486 aa).

S-adenosyl-L-methionine is bound by residues 124–130, Glu-148, Asp-175, and Asp-193; that span reads ASAPGSK. The active-site Nucleophile is Cys-246.

The protein belongs to the class I-like SAM-binding methyltransferase superfamily. RsmB/NOP family.

Its subcellular location is the cytoplasm. It carries out the reaction cytidine(1407) in 16S rRNA + S-adenosyl-L-methionine = 5-methylcytidine(1407) in 16S rRNA + S-adenosyl-L-homocysteine + H(+). In terms of biological role, specifically methylates the cytosine at position 1407 (m5C1407) of 16S rRNA. The protein is Ribosomal RNA small subunit methyltransferase F of Shewanella baltica (strain OS155 / ATCC BAA-1091).